Reading from the N-terminus, the 319-residue chain is 12-(S)-hydroxy-5,8,10,14-eicosatetraenoic acid receptor (319 aa).

The Extracellular portion of the chain corresponds to 1-16; the sequence is MERTNCSAASTVVETA. Asn5 is a glycosylation site (N-linked (GlcNAc...) asparagine). Residues 17-37 traverse the membrane as a helical segment; sequence VGTMLTLECVLGLMGNAVALW. Over 38 to 52 the chain is Cytoplasmic; that stretch reads TFFYRLKVWKPYAVY. A helical membrane pass occupies residues 53–73; that stretch reads LFNLVVADLLLATSLPFFAAF. Residues 74-91 lie on the Extracellular side of the membrane; that stretch reads YLKGKTWKLGHMPCQVLL. A helical transmembrane segment spans residues 92–110; the sequence is FLLAFSRGVGVAFLTTVAL. Residues 111 to 131 lie on the Cytoplasmic side of the membrane; the sequence is DRYLRVVHPRLRVNLLSLRAA. The helical transmembrane segment at 132 to 152 threads the bilayer; that stretch reads WGISSLIWLLMVVLTPQNLLT. Topologically, residues 153-180 are extracellular; that stretch reads CRTTQNSTECPSFYPTGGAKAIATCQEV. A helical membrane pass occupies residues 181 to 201; the sequence is LFFLQVLLPFGLISFCNSGLI. The Cytoplasmic portion of the chain corresponds to 202–219; sequence RTLQKRLRESDKQPRIRR. A helical transmembrane segment spans residues 220 to 240; the sequence is ARVLVAIVLLLFGLCFLPSVL. The Extracellular segment spans residues 241 to 265; the sequence is TRVLVHIFQEFKSCSVQQAIVRASD. Residues 266–284 traverse the membrane as a helical segment; that stretch reads IAGSLTCLHSTLSPAIYCF. The Cytoplasmic portion of the chain corresponds to 285–319; sequence SNPAFTHSYRKVLKSLRGRRKAAESPSDNLRDSYS.

It belongs to the G-protein coupled receptor 1 family. Interacts with KRAS; in a farnesylation-dependent manner.

It localises to the cell membrane. In terms of biological role, high-affinity receptor for 12-(S)-hydroxy-5,8,10,14-eicosatetraenoic acid (12-S-HETE), with much lower affinities for other HETE isomers. 12-S-HETE is a eicosanoid, a 12-lipoxygenase (ALOX12) metabolite of arachidonic acid, involved in many physiologic and pathologic processes, such as cell growth, adhesion, inflammation and cancer promotion. 12-S-HETE-binding leads to activation of ERK1/2 (MAPK3/MAPK1), MEK, and NF-kappa-B pathways and leads to cell growth. Plays a crucial role for proliferation, survival and macropinocytosis of KRAS-dependent cancer cells by mediating the translocation of KRAS from the endoplasmic reticulum to the plasma membrane (PM) and its association with the PM. Contributes to enhanced immune responses by inducing dendrite protrusion of small intestinal CX3CR1(+) phagocytes for the uptake of luminal antigens. Also acts as a key receptor for 12-(S)-HETE-mediated liver ischemia reperfusion injury. Its function is as follows. Proton-sensing G protein-coupled receptor. The sequence is that of 12-(S)-hydroxy-5,8,10,14-eicosatetraenoic acid receptor (Gpr31) from Mus musculus (Mouse).